The primary structure comprises 59 residues: Large ribosomal subunit protein uL30 (59 aa).

The protein belongs to the universal ribosomal protein uL30 family. Part of the 50S ribosomal subunit.

The chain is Large ribosomal subunit protein uL30 from Nocardia farcinica (strain IFM 10152).